Here is a 432-residue protein sequence, read N- to C-terminus: Adenylosuccinate synthetase (432 aa).

Residues 13-19 (GDEGKGK) and 41-43 (GHT) each bind GTP. Residue D14 is the Proton acceptor of the active site. Mg(2+) contacts are provided by D14 and G41. Residues 14 to 17 (DEGK), 39 to 42 (NAGH), T130, R144, Q225, T240, and R304 contribute to the IMP site. H42 serves as the catalytic Proton donor. 300–306 (ATTGRRR) is a binding site for substrate. Residues R306, 332-334 (KLD), and 415-417 (STG) each bind GTP.

The protein belongs to the adenylosuccinate synthetase family. Homodimer. Requires Mg(2+) as cofactor.

Its subcellular location is the cytoplasm. It catalyses the reaction IMP + L-aspartate + GTP = N(6)-(1,2-dicarboxyethyl)-AMP + GDP + phosphate + 2 H(+). It participates in purine metabolism; AMP biosynthesis via de novo pathway; AMP from IMP: step 1/2. In terms of biological role, plays an important role in the de novo pathway of purine nucleotide biosynthesis. Catalyzes the first committed step in the biosynthesis of AMP from IMP. This Salmonella choleraesuis (strain SC-B67) protein is Adenylosuccinate synthetase.